Here is a 208-residue protein sequence, read N- to C-terminus: FMN-dependent NADH:quinone oxidoreductase (208 aa).

Residues 17 to 19 (SNS), 99 to 102 (MWNL), and 143 to 146 (SRGG) contribute to the FMN site.

It belongs to the azoreductase type 1 family. In terms of assembly, homodimer. The cofactor is FMN.

The enzyme catalyses 2 a quinone + NADH + H(+) = 2 a 1,4-benzosemiquinone + NAD(+). It catalyses the reaction N,N-dimethyl-1,4-phenylenediamine + anthranilate + 2 NAD(+) = 2-(4-dimethylaminophenyl)diazenylbenzoate + 2 NADH + 2 H(+). Functionally, quinone reductase that provides resistance to thiol-specific stress caused by electrophilic quinones. In terms of biological role, also exhibits azoreductase activity. Catalyzes the reductive cleavage of the azo bond in aromatic azo compounds to the corresponding amines. This chain is FMN-dependent NADH:quinone oxidoreductase, found in Staphylococcus aureus (strain COL).